The following is a 63-amino-acid chain: Large ribosomal subunit protein uL29 (63 aa).

The protein belongs to the universal ribosomal protein uL29 family.

In Actinobacillus succinogenes (strain ATCC 55618 / DSM 22257 / CCUG 43843 / 130Z), this protein is Large ribosomal subunit protein uL29.